The chain runs to 481 residues: Polygalacturonase QRT3 (481 aa).

The signal sequence occupies residues 1–27 (MELRKSQVAMPVFLAIMSLMVSQVVFA). PbH1 repeat units follow at residues 203–226 (SLRT…LVKS), 261–282 (GNDN…MVSG), and 356–377 (IRGV…QIVQ). N-linked (GlcNAc...) asparagine glycosylation is found at N415 and N455.

The protein belongs to the glycosyl hydrolase 28 family. As to expression, expressed in the tapetum cells in the anthers and in the ovules of open flowers.

The protein resides in the secreted. The protein localises to the cell wall. It catalyses the reaction (1,4-alpha-D-galacturonosyl)n+m + H2O = (1,4-alpha-D-galacturonosyl)n + (1,4-alpha-D-galacturonosyl)m.. Functionally, polygalacturonase required for degrading the pollen mother cell wall during microspore development. This Arabidopsis thaliana (Mouse-ear cress) protein is Polygalacturonase QRT3 (QRT3).